The primary structure comprises 1193 residues: DNA-directed RNA polymerase subunit beta (1193 aa).

Over residues 1149-1162 (EEEIEMRDLEDEED) the composition is skewed to acidic residues. Positions 1149-1193 (EEEIEMRDLEDEEDAKQADGLALSGDEEPEETASADVERDVVTKE) are disordered. The segment covering 1184–1193 (DVERDVVTKE) has biased composition (basic and acidic residues).

The protein belongs to the RNA polymerase beta chain family. In terms of assembly, RNAP is composed of a core of 2 alpha, a beta and a beta' subunit. The core is associated with a delta subunit, and at least one of epsilon or omega. When a sigma factor is associated with the core the holoenzyme is formed, which can initiate transcription.

It catalyses the reaction RNA(n) + a ribonucleoside 5'-triphosphate = RNA(n+1) + diphosphate. DNA-dependent RNA polymerase catalyzes the transcription of DNA into RNA using the four ribonucleoside triphosphates as substrates. This Bacillus subtilis (strain 168) protein is DNA-directed RNA polymerase subunit beta.